We begin with the raw amino-acid sequence, 358 residues long: MSRQTQAIIHADALLHNFKALAAIAPSSQSMAVVKADAYGHGAVNVARILQHVSSQFAVAIIEEAIALRDAGISAPVVVLEGAHQAKECQMAFQHNCILVMHCEEQLQWLNNCPENQRPHIWLKVDSGMHRLGFAISDIEDMTKKYRHLLSEQTVIATHFACADDVDNGFTASQLSAFKRVADAIGLPTSVANSPATVNWPASRNAWNRLGVGVYGGAVSTANNVGVEIYPAMTLRSSILAVRTIAAGEGVGYGQRWVASKPSKIATVGIGYADGYPRHCKNKTPVMVRGKRAFLAGRVSMDMITIDVTHIDNVSVGDEVELWGQNVPIQEVAACADTIDYELMTRVSQRVPRIVKYL.

Lys35 functions as the Proton acceptor; specific for D-alanine in the catalytic mechanism. Position 35 is an N6-(pyridoxal phosphate)lysine (Lys35). Residue Arg131 participates in substrate binding. Tyr253 acts as the Proton acceptor; specific for L-alanine in catalysis. A substrate-binding site is contributed by Met301.

It belongs to the alanine racemase family. Pyridoxal 5'-phosphate serves as cofactor.

It carries out the reaction L-alanine = D-alanine. The protein operates within amino-acid biosynthesis; D-alanine biosynthesis; D-alanine from L-alanine: step 1/1. In terms of biological role, catalyzes the interconversion of L-alanine and D-alanine. May also act on other amino acids. The protein is Alanine racemase (alr) of Alteromonas mediterranea (strain DSM 17117 / CIP 110805 / LMG 28347 / Deep ecotype).